We begin with the raw amino-acid sequence, 1079 residues long: Intraflagellar transport protein 80 (1079 aa).

The disordered stretch occupies residues 495–514 (GDMIRPSTVQNQPSTQGLPN). Positions 501-514 (STVQNQPSTQGLPN) are enriched in polar residues.

It is found in the cell projection. The protein localises to the cilium. The protein resides in the flagellum. It localises to the cytoplasm. Its subcellular location is the cytoskeleton. It is found in the flagellum axoneme. The protein localises to the flagellum basal body. Component of the intraflagellar transport complex B (IFT-B) involved in flagellar assembly. In Giardia intestinalis (strain ATCC 50803 / WB clone C6) (Giardia lamblia), this protein is Intraflagellar transport protein 80.